The primary structure comprises 350 residues: Alcohol dehydrogenase 1 (350 aa).

C44, T46, H67, C98, C101, C104, C112, and C154 together coordinate Zn(2+). An alcohol contacts are provided by T46 and H67. T46 is an NAD(+) binding site. Residues 178–182, D202, K207, 271–273, and R343 each bind NAD(+); these read GAGGG and IGL.

It belongs to the zinc-containing alcohol dehydrogenase family. In terms of assembly, homotetramer. Requires Zn(2+) as cofactor.

Its subcellular location is the cytoplasm. It localises to the secreted. It catalyses the reaction a primary alcohol + NAD(+) = an aldehyde + NADH + H(+). The enzyme catalyses a secondary alcohol + NAD(+) = a ketone + NADH + H(+). This Emericella nidulans (strain FGSC A4 / ATCC 38163 / CBS 112.46 / NRRL 194 / M139) (Aspergillus nidulans) protein is Alcohol dehydrogenase 1 (alcA).